The sequence spans 373 residues: Alanine dehydrogenase (373 aa).

2 residues coordinate substrate: R15 and K75. Residue H96 is the Proton donor/acceptor of the active site. Residues S134, 178–179, D198, S220, 239–240, 267–270, R280, and 299–302 contribute to the NAD(+) site; these read IV, VL, VAID, and VANI. D270 (proton donor/acceptor) is an active-site residue.

It belongs to the AlaDH/PNT family. In terms of assembly, homohexamer. Trimer of dimer.

It localises to the cytoplasm. It carries out the reaction L-alanine + NAD(+) + H2O = pyruvate + NH4(+) + NADH + H(+). The protein operates within amino-acid degradation; L-alanine degradation via dehydrogenase pathway; NH(3) and pyruvate from L-alanine: step 1/1. Functionally, catalyzes the reversible reductive amination of pyruvate to L-alanine. This enzyme is a key factor in the assimilation of L-alanine as an energy source through the tricarboxylic acid cycle. The polypeptide is Alanine dehydrogenase (Methanococcus maripaludis (strain DSM 14266 / JCM 13030 / NBRC 101832 / S2 / LL)).